Here is a 573-residue protein sequence, read N- to C-terminus: Probable zinc metallopeptidase EGY3, chloroplastic (573 aa).

The N-terminal 50 residues, 1 to 50, are a transit peptide targeting the chloroplast; the sequence is MASLFVSTPSSSLTLKSCHSLHLRRFDRAEFSNFGKASVNQTTRSRHSLR. The tract at residues 38–105 is disordered; that stretch reads SVNQTTRSRH…EKKSKQQEMD (68 aa). 2 stretches are compositionally biased toward basic and acidic residues: residues 52–62 and 96–105; these read SAEDDRVREPV and EKKSKQQEMD. The stretch at 122–185 forms a coiled coil; sequence EAAIKLEKTR…KALDLNKLKS (64 aa). 7 consecutive transmembrane segments (helical) span residues 274–294, 305–325, 376–396, 414–434, 441–461, 493–513, and 536–556; these read VSAI…SGFF, IANV…SEIA, ASAY…DGSF, PLLS…GNVL, VGVP…VTSL, LLLG…GLFA, and FAWG…NSGG.

It belongs to the peptidase M50B family.

Its subcellular location is the plastid. It is found in the chloroplast membrane. Probable membrane-associated metalloprotease that may be involved in chloroplast development. This chain is Probable zinc metallopeptidase EGY3, chloroplastic (EGY3), found in Arabidopsis thaliana (Mouse-ear cress).